The chain runs to 85 residues: UPF0512 protein R (85 aa).

Belongs to the UPF0512 family.

The polypeptide is UPF0512 protein R (Dictyostelium discoideum (Social amoeba)).